The chain runs to 194 residues: ATP-dependent Clp protease proteolytic subunit (194 aa).

S98 acts as the Nucleophile in catalysis. The active site involves H123.

Belongs to the peptidase S14 family. Fourteen ClpP subunits assemble into 2 heptameric rings which stack back to back to give a disk-like structure with a central cavity, resembling the structure of eukaryotic proteasomes.

It is found in the cytoplasm. The enzyme catalyses Hydrolysis of proteins to small peptides in the presence of ATP and magnesium. alpha-casein is the usual test substrate. In the absence of ATP, only oligopeptides shorter than five residues are hydrolyzed (such as succinyl-Leu-Tyr-|-NHMec, and Leu-Tyr-Leu-|-Tyr-Trp, in which cleavage of the -Tyr-|-Leu- and -Tyr-|-Trp bonds also occurs).. Functionally, cleaves peptides in various proteins in a process that requires ATP hydrolysis. Has a chymotrypsin-like activity. Plays a major role in the degradation of misfolded proteins. This Syntrophus aciditrophicus (strain SB) protein is ATP-dependent Clp protease proteolytic subunit.